A 246-amino-acid polypeptide reads, in one-letter code: 2,5-diamino-6-ribosylamino-4(3H)-pyrimidinone 5'-phosphate reductase (246 aa).

NADP(+) contacts are provided by residues T78, D82, L163, and 186-190; that span reads GAEVL.

This sequence belongs to the HTP reductase family. As to quaternary structure, homodimer.

The catalysed reaction is 2,5-diamino-6-(1-D-ribitylamino)pyrimidin-4(3H)-one 5'-phosphate + NADP(+) = 2,5-diamino-6-(1-D-ribosylamino)pyrimidin-4(3H)-one 5'-phosphate + NADPH + H(+). It carries out the reaction 2,5-diamino-6-(1-D-ribitylamino)pyrimidin-4(3H)-one 5'-phosphate + NAD(+) = 2,5-diamino-6-(1-D-ribosylamino)pyrimidin-4(3H)-one 5'-phosphate + NADH + H(+). The protein operates within cofactor biosynthesis; riboflavin biosynthesis. Functionally, catalyzes an early step in riboflavin biosynthesis, the NADPH-dependent reduction of the ribose side chain of 2,5-diamino-6-ribosylamino-4(3H)-pyrimidinone 5'-phosphate, yielding 2,5-diamino-6-ribitylamino-4(3H)-pyrimidinone 5'-phosphate. This is 2,5-diamino-6-ribosylamino-4(3H)-pyrimidinone 5'-phosphate reductase (RIB7) from Eremothecium gossypii (strain ATCC 10895 / CBS 109.51 / FGSC 9923 / NRRL Y-1056) (Yeast).